The chain runs to 427 residues: Histidinol dehydrogenase (427 aa).

Residues Y127, Q187, and N210 each coordinate NAD(+). 3 residues coordinate substrate: S233, Q255, and H258. Positions 255 and 258 each coordinate Zn(2+). Catalysis depends on proton acceptor residues E323 and H324. Substrate-binding residues include H324, D357, E411, and H416. D357 is a Zn(2+) binding site. Residue H416 coordinates Zn(2+).

The protein belongs to the histidinol dehydrogenase family. Requires Zn(2+) as cofactor.

The enzyme catalyses L-histidinol + 2 NAD(+) + H2O = L-histidine + 2 NADH + 3 H(+). It participates in amino-acid biosynthesis; L-histidine biosynthesis; L-histidine from 5-phospho-alpha-D-ribose 1-diphosphate: step 9/9. Functionally, catalyzes the sequential NAD-dependent oxidations of L-histidinol to L-histidinaldehyde and then to L-histidine. In Streptococcus mutans serotype c (strain ATCC 700610 / UA159), this protein is Histidinol dehydrogenase.